The sequence spans 359 residues: Peptide chain release factor 1 (359 aa).

Q236 is subject to N5-methylglutamine.

It belongs to the prokaryotic/mitochondrial release factor family. Post-translationally, methylated by PrmC. Methylation increases the termination efficiency of RF1.

The protein resides in the cytoplasm. Its function is as follows. Peptide chain release factor 1 directs the termination of translation in response to the peptide chain termination codons UAG and UAA. In Streptococcus pyogenes serotype M3 (strain ATCC BAA-595 / MGAS315), this protein is Peptide chain release factor 1.